Consider the following 104-residue polypeptide: uncharacterized protein (104 aa).

This is an uncharacterized protein from Dictyostelium discoideum (Social amoeba).